The primary structure comprises 245 residues: uncharacterized protein (245 aa).

The signal sequence occupies residues 1-19 (MKLTQFISYAILSLSGVQA).

The protein localises to the secreted. This is an uncharacterized protein from Arthroderma benhamiae (strain ATCC MYA-4681 / CBS 112371) (Trichophyton mentagrophytes).